We begin with the raw amino-acid sequence, 544 residues long: Membrane protein insertase YidC (544 aa).

5 helical membrane passes run 13 to 33 (LSLF…SNIL), 343 to 363 (WGLS…PLTF), 409 to 429 (LGGC…YSLV), 461 to 481 (LYFV…FTQL), and 506 to 526 (MPIM…IYWI).

This sequence belongs to the OXA1/ALB3/YidC family. Type 1 subfamily. Interacts with the Sec translocase complex via SecD. Specifically interacts with transmembrane segments of nascent integral membrane proteins during membrane integration.

It localises to the cell inner membrane. In terms of biological role, required for the insertion and/or proper folding and/or complex formation of integral membrane proteins into the membrane. Involved in integration of membrane proteins that insert both dependently and independently of the Sec translocase complex, as well as at least some lipoproteins. Aids folding of multispanning membrane proteins. The polypeptide is Membrane protein insertase YidC (Borreliella burgdorferi (strain ZS7) (Borrelia burgdorferi)).